Consider the following 191-residue polypeptide: UPF0312 protein PSPA7_0523 (191 aa).

Residues 1 to 23 (MLKKTLAALALGSALFTAGQAMA) form the signal peptide.

This sequence belongs to the UPF0312 family. Type 1 subfamily.

The protein resides in the periplasm. In Pseudomonas paraeruginosa (strain DSM 24068 / PA7) (Pseudomonas aeruginosa (strain PA7)), this protein is UPF0312 protein PSPA7_0523.